The sequence spans 502 residues: 2,3-bisphosphoglycerate-independent phosphoglycerate mutase (502 aa).

Mn(2+) is bound by residues Asp-13 and Ser-63. Ser-63 serves as the catalytic Phosphoserine intermediate. Substrate is bound by residues His-117, 146-147, Arg-177, Arg-183, 251-254, and Lys-324; these read RD and RSDR. Residues Asp-389, His-393, Asp-430, His-431, and His-448 each contribute to the Mn(2+) site.

This sequence belongs to the BPG-independent phosphoglycerate mutase family. Monomer. Mn(2+) serves as cofactor.

It carries out the reaction (2R)-2-phosphoglycerate = (2R)-3-phosphoglycerate. It functions in the pathway carbohydrate degradation; glycolysis; pyruvate from D-glyceraldehyde 3-phosphate: step 3/5. In terms of biological role, catalyzes the interconversion of 2-phosphoglycerate and 3-phosphoglycerate. In Ureaplasma urealyticum serovar 10 (strain ATCC 33699 / Western), this protein is 2,3-bisphosphoglycerate-independent phosphoglycerate mutase.